A 231-amino-acid polypeptide reads, in one-letter code: Large ribosomal subunit protein uL1 (231 aa).

This sequence belongs to the universal ribosomal protein uL1 family. As to quaternary structure, part of the 50S ribosomal subunit.

Binds directly to 23S rRNA. The L1 stalk is quite mobile in the ribosome, and is involved in E site tRNA release. In terms of biological role, protein L1 is also a translational repressor protein, it controls the translation of the L11 operon by binding to its mRNA. The polypeptide is Large ribosomal subunit protein uL1 (Allorhizobium ampelinum (strain ATCC BAA-846 / DSM 112012 / S4) (Agrobacterium vitis (strain S4))).